A 1012-amino-acid chain; its full sequence is DNA polymerase catalytic subunit (1012 aa).

It belongs to the DNA polymerase type-B family.

The protein localises to the host nucleus. It catalyses the reaction DNA(n) + a 2'-deoxyribonucleoside 5'-triphosphate = DNA(n+1) + diphosphate. Replicates viral genomic DNA. The chain is DNA polymerase catalytic subunit (U38) from Human herpesvirus 6B (strain Z29) (HHV-6 variant B).